A 163-amino-acid chain; its full sequence is uncharacterized protein (163 aa).

A run of 2 helical transmembrane segments spans residues 7 to 27 and 51 to 71; these read YLNEIWLIIGIICILVECYIV and LVIFTLTNQITFFGLFSLVWF.

The protein localises to the cell membrane. This is an uncharacterized protein from Rickettsia prowazekii (strain Madrid E).